The sequence spans 238 residues: Ribosomal RNA small subunit methyltransferase G (238 aa).

S-adenosyl-L-methionine is bound by residues Gly77, Phe82, 128–129 (AE), and Arg147.

This sequence belongs to the methyltransferase superfamily. RNA methyltransferase RsmG family.

It is found in the cytoplasm. Its function is as follows. Specifically methylates the N7 position of guanine in position 535 of 16S rRNA. This is Ribosomal RNA small subunit methyltransferase G from Exiguobacterium sp. (strain ATCC BAA-1283 / AT1b).